Here is a 382-residue protein sequence, read N- to C-terminus: Chaperone protein DnaJ (382 aa).

Positions 5-70 (DFYEILGVPK…QKRAAYDQYG (66 aa)) constitute a J domain. The CR-type zinc finger occupies 137 to 215 (GVTKEIRIPT…CHGHGRVEKT (79 aa)). Positions 150, 153, 167, 170, 189, 192, 203, and 206 each coordinate Zn(2+). CXXCXGXG motif repeat units lie at residues 150-157 (CDICHGSG), 167-174 (CPTCHGSG), 189-196 (CPHCHGRG), and 203-210 (CNKCHGHG).

Belongs to the DnaJ family. Homodimer. Requires Zn(2+) as cofactor.

It is found in the cytoplasm. In terms of biological role, participates actively in the response to hyperosmotic and heat shock by preventing the aggregation of stress-denatured proteins and by disaggregating proteins, also in an autonomous, DnaK-independent fashion. Unfolded proteins bind initially to DnaJ; upon interaction with the DnaJ-bound protein, DnaK hydrolyzes its bound ATP, resulting in the formation of a stable complex. GrpE releases ADP from DnaK; ATP binding to DnaK triggers the release of the substrate protein, thus completing the reaction cycle. Several rounds of ATP-dependent interactions between DnaJ, DnaK and GrpE are required for fully efficient folding. Also involved, together with DnaK and GrpE, in the DNA replication of plasmids through activation of initiation proteins. The chain is Chaperone protein DnaJ from Enterobacter sp. (strain 638).